The sequence spans 802 residues: MRWDLITAIVAALVVSVLADESGQMAPYRIHTLFSVECQNYFDWQTVGLMHSFLKSGQPGPITRLLSCTDDQKKTYRGMNLAPTFEVPSWSRHPKTGDWYPAINKPVGVLYWLQHSEEAKHVDWVVILDADMIIRGPIIPWELGAERGRPFAAHYGYLVGCDNLLVRLHTKHPELCDKVGGLLAMHIDDLRVLAPLWLSKTEDVRQDTAHWTTNLTGDIYGKGWISEMYGYSFGAAEAGLKHKINDDLMIYPGYVPREGVEPVLMHYGLPFSIGNWSFTKLDHHEDNIVYDCNRLFPEPPYPREVKIMEPDPSKRRGLILSLECMNTLNEGLILRHAENGCPKPKWTKYLSFLKSKTFMELTRPKLLAPGSVHILPDQHEPPPIDEFKGTYPKIHTLFSTECTTYFDWQTVGFMHSFRQSGQPGNITRLLSCTDEALKNYKGHDLAPTHYVPSMSRHPLTGDWYPAINKPAAVVHWLHHTNIDAEYVVILDADMILRGPITPWEFKAARGRPVSTPYDYLIGCDNDLARLHTRNPEACDKVGGVIIMHIEDLRKFAMYWLLKTQEVRADKEHYGKELTGDIYESGWISEMYGYSFGAAELNLRHSINKEIMIYPGYVPEPGADYRVFHYGLEFKVGNWSFDKANWRNTDLINKCWAKFPDPPSPSAVHQTDNDLRQRDLLSIECGQKLNEALFLHHKRRNCPEPGSESTEKISVSRKVGNIETKQTQGSDETKESSGSSESEGRFSTLKLWVIALWLISGVGFLVVMLLVFSTRRGRGTTRGKGYRNKRRTSYSNTGFLDTK.

The signal sequence occupies residues 1-19 (MRWDLITAIVAALVVSVLA). Residues 20–750 (DESGQMAPYR…SEGRFSTLKL (731 aa)) lie on the Extracellular side of the membrane. Residues asparagine 214, asparagine 275, asparagine 425, and asparagine 637 are each glycosylated (N-linked (GlcNAc...) asparagine). Residues 699 to 741 (RNCPEPGSESTEKISVSRKVGNIETKQTQGSDETKESSGSSES) are disordered. Residues 751-771 (WVIALWLISGVGFLVVMLLVF) form a helical membrane-spanning segment. Over 772-802 (STRRGRGTTRGKGYRNKRRTSYSNTGFLDTK) the chain is Cytoplasmic. A compositionally biased stretch (basic residues) spans 777–791 (RGTTRGKGYRNKRRT). Residues 777–802 (RGTTRGKGYRNKRRTSYSNTGFLDTK) form a disordered region. A compositionally biased stretch (polar residues) spans 792-802 (SYSNTGFLDTK).

The protein resides in the endoplasmic reticulum membrane. In terms of biological role, glycosyltransferase involved in the O-galactosylation of several proteins including extensins. Catalyzes the transfer of alpha-galactosyl to Ser residues. Hydroxylation of proline residues adjacent to the serine acceptor is required for activity. This Arabidopsis thaliana (Mouse-ear cress) protein is Peptidyl serine alpha-galactosyltransferase.